The primary structure comprises 683 residues: DNA ligase 2 (683 aa).

Residues 27–31 (DGEFD), 76–77 (SL), and E106 each bind NAD(+). K108 acts as the N6-AMP-lysine intermediate in catalysis. R129, E169, K285, and K309 together coordinate NAD(+). Zn(2+)-binding residues include C403, C406, C422, and C428. In terms of domain architecture, BRCT spans 592-681 (SIERTLEGLS…PAAVAAEEPE (90 aa)).

It belongs to the NAD-dependent DNA ligase family. LigA subfamily. Mg(2+) serves as cofactor. Requires Mn(2+) as cofactor.

The enzyme catalyses NAD(+) + (deoxyribonucleotide)n-3'-hydroxyl + 5'-phospho-(deoxyribonucleotide)m = (deoxyribonucleotide)n+m + AMP + beta-nicotinamide D-nucleotide.. Its function is as follows. DNA ligase that catalyzes the formation of phosphodiester linkages between 5'-phosphoryl and 3'-hydroxyl groups in double-stranded DNA using NAD as a coenzyme and as the energy source for the reaction. It is essential for DNA replication and repair of damaged DNA. The polypeptide is DNA ligase 2 (Nocardia farcinica (strain IFM 10152)).